Reading from the N-terminus, the 336-residue chain is Aspartate--ammonia ligase (336 aa).

Belongs to the class-II aminoacyl-tRNA synthetase family. AsnA subfamily.

The protein localises to the cytoplasm. It carries out the reaction L-aspartate + NH4(+) + ATP = L-asparagine + AMP + diphosphate + H(+). The protein operates within amino-acid biosynthesis; L-asparagine biosynthesis; L-asparagine from L-aspartate (ammonia route): step 1/1. The polypeptide is Aspartate--ammonia ligase (Ligilactobacillus salivarius (strain UCC118) (Lactobacillus salivarius)).